The following is a 768-amino-acid chain: Envelope glycoprotein gp160 (768 aa).

The first 16 residues, 1-16 (MTKFLGIFIVLGIGIG), serve as a signal peptide directing secretion. Residues 17–701 (IGISTKQQWI…SWFDFSKWLN (685 aa)) are Extracellular-facing. Residue asparagine 37 is glycosylated (N-linked (GlcNAc...) asparagine; by host). The cysteines at positions 44 and 57 are disulfide-linked. 7 N-linked (GlcNAc...) asparagine; by host glycosylation sites follow: asparagine 70, asparagine 141, asparagine 151, asparagine 166, asparagine 181, asparagine 200, and asparagine 211. Disulfide bonds link cysteine 103–cysteine 219, cysteine 110–cysteine 210, cysteine 115–cysteine 167, cysteine 232–cysteine 262, and cysteine 242–cysteine 254. Residues 115–166 (CVELKGSATSTPATSTTAGTKLPCVRNKTDSNLQSCNDTIIEKEMNDEAASN) are V1. Residues 167 to 210 (CTFAMAGYIRDQKKNYSVVWNDAEIFCKRSTSHNGTKECYMIHC) form a V2 region. N-linked (GlcNAc...) asparagine; by host glycosylation is found at asparagine 256, asparagine 267, asparagine 277, asparagine 283, asparagine 295, asparagine 307, asparagine 317, asparagine 374, asparagine 415, asparagine 490, and asparagine 493. A V3 region spans residues 312–344 (CKRPGNKTVLPVTIMAGLVFHSQKYNTRLRQAW). A disulfide bridge connects residues cysteine 312 and cysteine 345. Disulfide bonds link cysteine 397-cysteine 473 and cysteine 404-cysteine 446. The V4 stretch occupies residues 404–446 (CKMDWFLNYLNNLTVDADHNHCKNNAGKGRSPGPCVQRTYVAC). A V5 region spans residues 489 to 496 (QNRTNVTL). Positions 539 to 559 (VPFVLGFLGFLGAAGTAMGAA) are fusion peptide. The immunosuppression stretch occupies residues 602 to 618 (LNARVTALEKYLADQAR). Asparagine 646 and asparagine 662 each carry an N-linked (GlcNAc...) asparagine; by host glycan. Residues 650–687 (LEWEKQIEGLEGNITKQLEQAREQEEKNLDAYQKLSDW) are a coiled coil. Residues 683–704 (KLSDWSSFWSWFDFSKWLNILK) are MPER; binding to GalCer. A helical membrane pass occupies residues 702–722 (ILKIGFLAVIGVIGLRLLYTL). Residues 723 to 768 (YTCIARVRQGYSPLSPQIHIHPWKGQPDNAGEPEEGGRTGKSKSTH) are Cytoplasmic-facing. The YXXL motif; contains endocytosis signal signature appears at 733 to 736 (YSPL). A disordered region spans residues 744-768 (PWKGQPDNAGEPEEGGRTGKSKSTH).

In terms of assembly, the mature envelope protein (Env) consists of a homotrimer of non-covalently associated gp120-gp41 heterodimers. The resulting complex protrudes from the virus surface as a spike. Interacts with host CD4 and CCR5. Gp120 also interacts with the C-type lectins CD209/DC-SIGN and CLEC4M/DC-SIGNR (collectively referred to as DC-SIGN(R)). As to quaternary structure, the mature envelope protein (Env) consists of a homotrimer of non-covalently associated gp120-gp41 heterodimers. The resulting complex protrudes from the virus surface as a spike. In terms of processing, specific enzymatic cleavages in vivo yield mature proteins. Envelope glycoproteins are synthesized as an inactive precursor that is heavily N-glycosylated and processed likely by host cell furin in the Golgi to yield the mature SU and TM proteins. The cleavage site between SU and TM requires the minimal sequence [KR]-X-[KR]-R.

It localises to the virion membrane. It is found in the host cell membrane. The protein resides in the host endosome membrane. The surface protein gp120 (SU) attaches the virus to the host lymphoid cell by binding to the primary receptor CD4. This interaction induces a structural rearrangement creating a high affinity binding site for a chemokine coreceptor like CCR5. This peculiar 2 stage receptor-interaction strategy allows gp120 to maintain the highly conserved coreceptor-binding site in a cryptic conformation, protected from neutralizing antibodies. These changes are transmitted to the transmembrane protein gp41 and are thought to activate its fusogenic potential by unmasking its fusion peptide. In terms of biological role, surface protein gp120 (SU) may target the virus to gut-associated lymphoid tissue (GALT) by binding host ITGA4/ITGB7 (alpha-4/beta-7 integrins), a complex that mediates T-cell migration to the GALT. Interaction between gp120 and ITGA4/ITGB7 would allow the virus to enter GALT early in the infection, infecting and killing most of GALT's resting CD4+ T-cells. This T-cell depletion is believed to be the major insult to the host immune system leading to AIDS. Functionally, the surface protein gp120 is a ligand for CD209/DC-SIGN and CLEC4M/DC-SIGNR, which are respectively found on dendritic cells (DCs), and on endothelial cells of liver sinusoids and lymph node sinuses. These interactions allow capture of viral particles at mucosal surfaces by these cells and subsequent transmission to permissive cells. DCs are professional antigen presenting cells, critical for host immunity by inducing specific immune responses against a broad variety of pathogens. They act as sentinels in various tissues where they take up antigen, process it, and present it to T-cells following migration to lymphoid organs. SIV subverts the migration properties of dendritic cells to gain access to CD4+ T-cells in lymph nodes. Virus transmission to permissive T-cells occurs either in trans (without DCs infection, through viral capture and transmission), or in cis (following DCs productive infection, through the usual CD4-gp120 interaction), thereby inducing a robust infection. In trans infection, bound virions remain infectious over days and it is proposed that they are not degraded, but protected in non-lysosomal acidic organelles within the DCs close to the cell membrane thus contributing to the viral infectious potential during DCs' migration from the periphery to the lymphoid tissues. On arrival at lymphoid tissues, intact virions recycle back to DCs' cell surface allowing virus transmission to CD4+ T-cells. Virion capture also seems to lead to MHC-II-restricted viral antigen presentation, and probably to the activation of SIV-specific CD4+ cells. Its function is as follows. The transmembrane protein gp41 (TM) acts as a class I viral fusion protein. Under the current model, the protein has at least 3 conformational states: pre-fusion native state, pre-hairpin intermediate state, and post-fusion hairpin state. During fusion of viral and target intracellular membranes, the coiled coil regions (heptad repeats) assume a trimer-of-hairpins structure, positioning the fusion peptide in close proximity to the C-terminal region of the ectodomain. The formation of this structure appears to drive apposition and subsequent fusion of viral and target cell membranes. Complete fusion occurs in host cell endosomes. The virus undergoes clathrin-dependent internalization long before endosomal fusion, thus minimizing the surface exposure of conserved viral epitopes during fusion and reducing the efficacy of inhibitors targeting these epitopes. Membranes fusion leads to delivery of the nucleocapsid into the cytoplasm. The envelope glycoprotein gp160 precursor down-modulates cell surface CD4 antigen by interacting with it in the endoplasmic reticulum and blocking its transport to the cell surface. In terms of biological role, the gp120-gp41 heterodimer allows rapid transcytosis of the virus through CD4 negative cells such as simple epithelial monolayers of the intestinal, rectal and endocervical epithelial barriers. Both gp120 and gp41 specifically recognize glycosphingolipids galactosyl-ceramide (GalCer) or 3' sulfo-galactosyl-ceramide (GalS) present in the lipid rafts structures of epithelial cells. Binding to these alternative receptors allows the rapid transcytosis of the virus through the epithelial cells. This transcytotic vesicle-mediated transport of virions from the apical side to the basolateral side of the epithelial cells does not involve infection of the cells themselves. This chain is Envelope glycoprotein gp160 (env), found in Simian immunodeficiency virus agm.vervet (isolate AGM155) (SIV-agm.ver).